A 1243-amino-acid chain; its full sequence is Membrane-associated phosphatidylinositol transfer protein 1 (1243 aa).

Phosphothreonine occurs at positions 59, 282, and 287. The interval 259–330 (CNTGSEGPEA…HGGGVSPQSL (72 aa)) is disordered. Residues 271 to 283 (PGKSSTEARPGTS) are compositionally biased toward polar residues. Low complexity predominate over residues 299 to 319 (ASPDASFGKQWSSSSRSSYSS). A phosphoserine mark is found at Ser300, Ser304, Ser319, Ser326, Ser329, Ser342, Ser345, Ser346, and Ser373. Ser382 is modified (phosphoserine; by CDK1). A compositionally biased stretch (low complexity) spans 581–593 (AGPGSRGSSRRGS). Residues 581–679 (AGPGSRGSSR…PASSEAPDGP (99 aa)) form a disordered region. Phosphoserine is present on residues Ser593, Ser600, and Ser621. Polar residues predominate over residues 643-658 (GSQNSLQVASTATSSG). Residues 684–878 (RLDFKVSGFF…VVAFILRQVI (195 aa)) enclose the DDHD domain. Ser895 is modified (phosphoserine). A disordered region spans residues 1206-1243 (LLRSRGPSQVDREGPGTPPTTLARGKTRSISLKLDSEE). Arg1210 and Arg1217 each carry omega-N-methylarginine. Ser1236 is modified (phosphoserine).

The protein belongs to the PtdIns transfer protein family. PI transfer class IIA subfamily. In terms of assembly, interacts with PTK2B via its C-terminus. Interacts with RHOA. Has higher affinity for the inactive, GDP-bound form of RHOA. The CDK1-phosphorylated form interacts with PLK1. Interacts with VAPB and PIK4CA. In terms of processing, phosphorylated on multiple sites by CDK1 at the onset of mitosis. Phosphorylation facilitates dissociation from the Golgi complex and is required for interaction with PLK1. Phosphorylated on threonine residues upon treatment with oleic acid. Post-translationally, phosphorylated on tyrosine residues by PTK2B. As to expression, detected at high levels in brain, and at lower levels in lung, kidney, spleen and liver (at protein level). Ubiquitous. Highly expressed in embryonic retina and the central nervous system.

It is found in the cytoplasm. It localises to the golgi apparatus. Its subcellular location is the golgi stack membrane. The protein resides in the endoplasmic reticulum membrane. The protein localises to the lipid droplet. It is found in the cleavage furrow. It localises to the midbody. The catalysed reaction is a 1,2-diacyl-sn-glycero-3-phospho-(1D-myo-inositol)(in) = a 1,2-diacyl-sn-glycero-3-phospho-(1D-myo-inositol)(out). Catalyzes the transfer of phosphatidylinositol (PI) between membranes. Binds PI. Also binds phosphatidylcholine (PC) and phosphatidic acid (PA) with the binding affinity order of PI &gt; PA &gt; PC. Regulates RHOA activity, and plays a role in cytoskeleton remodeling. Necessary for normal completion of cytokinesis. Plays a role in maintaining normal diacylglycerol levels in the Golgi apparatus. Necessary for maintaining the normal structure of the endoplasmic reticulum and the Golgi apparatus. Required for protein export from the endoplasmic reticulum and the Golgi. Binds calcium ions. The sequence is that of Membrane-associated phosphatidylinositol transfer protein 1 (Pitpnm1) from Mus musculus (Mouse).